A 442-amino-acid polypeptide reads, in one-letter code: Ribosomal protein uS12 methylthiotransferase RimO (442 aa).

The MTTase N-terminal domain maps to 8-118 (PKVGFVSLGC…VLGHVHKYVA (111 aa)). [4Fe-4S] cluster contacts are provided by Cys-17, Cys-53, Cys-82, Cys-150, Cys-154, and Cys-157. The region spanning 136-373 (LTPRHYAYLK…MELQQQVSIR (238 aa)) is the Radical SAM core domain. A TRAM domain is found at 376 to 442 (ARKVGKEMTV…EYDLWASLIG (67 aa)).

The protein belongs to the methylthiotransferase family. RimO subfamily. The cofactor is [4Fe-4S] cluster.

The protein resides in the cytoplasm. The enzyme catalyses L-aspartate(89)-[ribosomal protein uS12]-hydrogen + (sulfur carrier)-SH + AH2 + 2 S-adenosyl-L-methionine = 3-methylsulfanyl-L-aspartate(89)-[ribosomal protein uS12]-hydrogen + (sulfur carrier)-H + 5'-deoxyadenosine + L-methionine + A + S-adenosyl-L-homocysteine + 2 H(+). Catalyzes the methylthiolation of an aspartic acid residue of ribosomal protein uS12. This is Ribosomal protein uS12 methylthiotransferase RimO from Aeromonas salmonicida (strain A449).